We begin with the raw amino-acid sequence, 406 residues long: Peptidase T (406 aa).

Histidine 82 serves as a coordination point for Zn(2+). Aspartate 84 is an active-site residue. Residue aspartate 142 coordinates Zn(2+). Glutamate 176 acts as the Proton acceptor in catalysis. Zn(2+)-binding residues include glutamate 177, aspartate 199, and histidine 381.

It belongs to the peptidase M20B family. It depends on Zn(2+) as a cofactor.

Its subcellular location is the cytoplasm. The catalysed reaction is Release of the N-terminal residue from a tripeptide.. In terms of biological role, cleaves the N-terminal amino acid of tripeptides. The polypeptide is Peptidase T (Streptococcus agalactiae serotype V (strain ATCC BAA-611 / 2603 V/R)).